The chain runs to 122 residues: Large ribosomal subunit protein uL18 (122 aa).

Belongs to the universal ribosomal protein uL18 family. In terms of assembly, part of the 50S ribosomal subunit; part of the 5S rRNA/L5/L18/L25 subcomplex. Contacts the 5S and 23S rRNAs.

Functionally, this is one of the proteins that bind and probably mediate the attachment of the 5S RNA into the large ribosomal subunit, where it forms part of the central protuberance. The chain is Large ribosomal subunit protein uL18 from Desulforamulus reducens (strain ATCC BAA-1160 / DSM 100696 / MI-1) (Desulfotomaculum reducens).